The primary structure comprises 949 residues: Sensor histidine kinase RcsC (949 aa).

Residues 1–19 (MKYLASFRTTLKASRYMFR) lie on the Cytoplasmic side of the membrane. The helical transmembrane segment at 20-41 (ALALVLWLLIAFSSVFYIVNAL) threads the bilayer. Residues 42–313 (HQRESEIRQE…PVDKVLERIR (272 aa)) are Periplasmic-facing. Residues 314 to 335 (MVILNAILLNVLAGAALFTLAR) traverse the membrane as a helical segment. Over 336-949 (MYERRIFIPA…AERVRKSRES (614 aa)) the chain is Cytoplasmic. One can recognise a PAS domain in the interval 357–425 (QFNRKIVASA…VLTSNNTNLQ (69 aa)). One can recognise a Histidine kinase domain in the interval 476 to 692 (TVSHELRTPL…QFTVRIPLYG (217 aa)). A Phosphohistidine; by autocatalysis modification is found at H479. An ABL domain is found at 705 to 805 (SGKRCWLAVR…ARIYLIEMES (101 aa)). The Response regulatory domain occupies 826–940 (MILVVDDHPI…VIKQTLTVYA (115 aa)). 4-aspartylphosphate is present on D875.

Belongs to the RcsC family. Interacts with RcsD. Autophosphorylated. Activation probably requires a transfer of a phosphate group from a His in the transmitter domain to an Asp in the receiver domain.

It localises to the cell inner membrane. It catalyses the reaction ATP + protein L-histidine = ADP + protein N-phospho-L-histidine.. Its function is as follows. Component of the Rcs signaling system, which controls transcription of numerous genes. RcsC functions as a membrane-associated protein kinase that phosphorylates RcsD in response to environmental signals. The phosphoryl group is then transferred to the response regulator RcsB. Involved in regulation of K30 capsular polysaccharide synthesis. In Escherichia coli, this protein is Sensor histidine kinase RcsC.